Here is a 162-residue protein sequence, read N- to C-terminus: Phosphopantetheine adenylyltransferase (162 aa).

T9 provides a ligand contact to substrate. ATP is bound by residues 9–10 (TF) and H17. Positions 41, 77, and 91 each coordinate substrate. ATP-binding positions include 92–94 (GLR), E102, and 127–133 (RQAIASK).

The protein belongs to the bacterial CoaD family. In terms of assembly, homohexamer. Mg(2+) is required as a cofactor.

Its subcellular location is the cytoplasm. It catalyses the reaction (R)-4'-phosphopantetheine + ATP + H(+) = 3'-dephospho-CoA + diphosphate. The protein operates within cofactor biosynthesis; coenzyme A biosynthesis; CoA from (R)-pantothenate: step 4/5. Functionally, reversibly transfers an adenylyl group from ATP to 4'-phosphopantetheine, yielding dephospho-CoA (dPCoA) and pyrophosphate. The sequence is that of Phosphopantetheine adenylyltransferase from Cereibacter sphaeroides (strain ATCC 17029 / ATH 2.4.9) (Rhodobacter sphaeroides).